Here is a 341-residue protein sequence, read N- to C-terminus: Small ribosomal subunit biogenesis GTPase RsgA (341 aa).

The 157-residue stretch at 112-268 folds into the CP-type G domain; it reads RQQLIAANLD…LIDTPGMREL (157 aa). GTP is bound by residues 157-160 and 210-218; these read TKVD and GSSGAGKST. Zn(2+)-binding residues include cysteine 290, cysteine 295, histidine 297, and cysteine 303.

It belongs to the TRAFAC class YlqF/YawG GTPase family. RsgA subfamily. As to quaternary structure, monomer. Associates with 30S ribosomal subunit, binds 16S rRNA. Zn(2+) is required as a cofactor.

Its subcellular location is the cytoplasm. Functionally, one of several proteins that assist in the late maturation steps of the functional core of the 30S ribosomal subunit. Helps release RbfA from mature subunits. May play a role in the assembly of ribosomal proteins into the subunit. Circularly permuted GTPase that catalyzes slow GTP hydrolysis, GTPase activity is stimulated by the 30S ribosomal subunit. This is Small ribosomal subunit biogenesis GTPase RsgA from Xylella fastidiosa (strain Temecula1 / ATCC 700964).